Here is a 1895-residue protein sequence, read N- to C-terminus: MSEKEELPLTLTSIGAATATSDYHQRVGSSGEGISSSSSDVDPRFMQNSPTGLMISQSSSMCTVPPGMAATPPISSGSGLSQQLNNSSSSKLCQVEGCQKGARDASGRCISHGGGRRCQKPDCQKGAEGKTVYCKAHGGGRRCEYLGCTKGAEGSTDFCIAHGGGRRCNHEDCTRSAWGRTEFCVKHGGGARCKTYGCGKSASGPLPFCRAHGGGKKCSHEDCTGFARGRSGLCLMHGGGKRCQRENCTKSAEGLSGLCISHGGGRRCQSIGCTKGAKGSKMFCKACITKRPLTIDGGGNMGGVTTGDALNYLKAVKDKFEDSEKYDTFLEVLNDCKHQGVDTSGVIARLKDLFKGHDDLLLGFNTYLSKEYQITILPEDDFPIDFLDKVEGPYEMTYQQAQTVQANANMQPQTEYPSSSAVQSFSSGQPQIPTSAPDSSLLAKSNTSGITIIEHMSQQPLNVDKQVNDGYNWQKYGQKKVKGSKFPLSYYKCTYLGCPSKRKVERSLDGQVAEIVYKDRHNHEPPNQGKDGSTTYLSGSSTHINCMSSELTASQFSSNKTKIEQQEAASLATTIEYMSEASDNEEDSNGETSEGEKDEDEPEPKRRITEVQVSELADASDRTVREPRVIFQTTSEVDNLDDGYRWRKYGQKVVKGNPYPRFSSSKDYDVVIRYGRADISNEDFISHLRASLCRRGISVYEKFNEVDALPKCRVLIIVLTSTYVPSNLLNILEHQHTEDRVVYPIFYRLSPYDFVCNSKNYERFYLQDEPKKWQAALKEITQMPGYTLTDKSESELIDEIVRDALKVLCSADKVNMIGMDMQVEEILSLLCIESLDVRSIGIWGTVGIGKTTIAEEIFRKISVQYETCVVLKDLHKEVEVKGHDAVRENFLSEVLEVEPHVIRISDIKTSFLRSRLQRKRILVILDDVNDYRDVDTFLGTLNYFGPGSRIIMTSRNRRVFVLCKIDHVYEVKPLDIPKSLLLLDRGTCQIVLSPEVYKTLSLELVKFSNGNPQVLQFLSSIDREWNKLSQEVKTTSPIYIPGIFEKSCCGLDDNERGIFLDIACFFNRIDKDNVAMLLDGCGFSAHVGFRGLVDKSLLTISQHNLVDMLSFIQATGREIVRQESADRPGDRSRLWNADYIRHVFINDTGTSAIEGIFLDMLNLKFDANPNVFEKMCNLRLLKLYCSKAEEKHGVSFPQGLEYLPSKLRLLHWEYYPLSSLPKSFNPENLVELNLPSSCAKKLWKGKKARFCTTNSSLEKLKKMRLSYSDQLTKIPRLSSATNLEHIDLEGCNSLLSLSQSISYLKKLVFLNLKGCSKLENIPSMVDLESLEVLNLSGCSKLGNFPEISPNVKELYMGGTMIQEIPSSIKNLVLLEKLDLENSRHLKNLPTSIYKLKHLETLNLSGCISLERFPDSSRRMKCLRFLDLSRTDIKELPSSISYLTALDELLFVDSRRNSPVVTNPNANSTELMPSESSKLEILGTPADNEVVVGGTVEKTRGIERTPTILVKSREYLIPDDVVAVGGDIKGLRPPVLQLQPAMKLSHIPRGSTWDFVTHFAPPETVAPPSSSSEAREEEVETEETGAMFIPLGDKETCSFTVNKGDSSRTISNTSPIYASEGSFITCWQKGQLLGRGSLGSVYEGISADGDFFAFKEVSLLDQGSQAHEWIQQVEGGIALLSQLQHQNIVRYRGTTKDESNLYIFLELVTQGSLRKLYQRNQLGDSVVSLYTRQILDGLKYLHDKGFIHRNIKCANVLVDANGTVKLADFGLAKVMSLWRTPYWNWMAPEVILNPKDYDGYGTPADIWSLGCTVLEMLTGQIPYSDLEIGTALYNIGTGKLPKIPDILSLDARDFILTCLKVNPEERPTAAELLNHPFVNMPLPSSGSGSVSSLLRG.

The segment at 1–85 is disordered; that stretch reads MSEKEELPLT…SGSGLSQQLN (85 aa). The segment covering 10 to 22 has biased composition (polar residues); that stretch reads TLTSIGAATATSD. Over residues 28–39 the composition is skewed to low complexity; sequence GSSGEGISSSSS. Polar residues predominate over residues 46-62; the sequence is MQNSPTGLMISQSSSMC. Residues 75 to 85 show a composition bias toward low complexity; that stretch reads SSGSGLSQQLN. In terms of domain architecture, PAH spans 291–371; it reads RPLTIDGGGN…LGFNTYLSKE (81 aa). A compositionally biased stretch (polar residues) spans 408 to 417; the sequence is ANMQPQTEYP. Disordered stretches follow at residues 408-442, 517-538, and 580-620; these read ANMQPQTEYPSSSAVQSFSSGQPQIPTSAPDSSLL, YKDRHNHEPPNQGKDGSTTYLS, and EASD…ADAS. Residues 418 to 427 are compositionally biased toward low complexity; that stretch reads SSSAVQSFSS. A compositionally biased stretch (polar residues) spans 428 to 442; it reads GQPQIPTSAPDSSLL. The WRKY 1 DNA-binding region spans 462-526; the sequence is NVDKQVNDGY…YKDRHNHEPP (65 aa). The segment at residues 635–700 is a DNA-binding region (WRKY 2); the sequence is SEVDNLDDGY…SLCRRGISVY (66 aa). The TIR domain occupies 666–808; it reads KDYDVVIRYG…EIVRDALKVL (143 aa). Residues 800 to 1087 form the NB-ARC domain; sequence IVRDALKVLC…LDGCGFSAHV (288 aa). 844-851 contacts ATP; sequence GTVGIGKT. LRR repeat units follow at residues 1206–1227, 1228–1249, 1259–1281, 1282–1304, 1306–1328, 1329–1351, 1352–1371, 1373–1395, 1397–1419, and 1421–1442; these read KLRLLHWEYYPLSSLPKSFNPE, NLVELNLPSSCAKKLWKGKKAR, KLKKMRLSYSDQLTKIPRLSSAT, NLEHIDLEGCNSLLSLSQSISYL, KLVFLNLKGCSKLENIPSMVDLE, SLEVLNLSGCSKLGNFPEISPNV, KELYMGGTMIQEIPSSIKNL, LLEKLDLENSRHLKNLPTSIYKL, HLETLNLSGCISLERFPDSSRRM, and CLRFLDLSRTDIKELPSSISYL. Residues 1562–1583 form a disordered region; sequence ETVAPPSSSSEAREEEVETEET. The Protein kinase domain maps to 1626 to 1877; the sequence is WQKGQLLGRG…AAELLNHPFV (252 aa). ATP is bound by residues 1632–1640 and Lys1654; that span reads LGRGSLGSV. Asp1758 is a catalytic residue.

It belongs to the disease resistance X-TIR-NB-LRR-X family.

It localises to the nucleus. Functionally, transcription factor. Interacts specifically with the W box (5'-(T)TGAC[CT]-3'), a frequently occurring elicitor-responsive cis-acting element. May act also as a disease resistance protein with a serine/threonine-protein kinase activity. This is Probable WRKY transcription factor 19 (WRKY19) from Arabidopsis thaliana (Mouse-ear cress).